The chain runs to 234 residues: Transcription factor UDT1 (234 aa).

Residues 1 to 51 are disordered; it reads MPRRARARGGGGGGGEEVKVEDDFIDSVLNFGGGGGGEEDGDDGEEEQQQQ. Over residues 37–48 the composition is skewed to acidic residues; it reads GEEDGDDGEEEQ. A basic motif; degenerate region spans residues 61 to 74; the sequence is EFKSKNLEAERRRR. The bHLH domain maps to 61 to 110; sequence EFKSKNLEAERRRRGRLNGNIFALRAVVPKITKMSKEATLSDAIEHIKNL. Residues 75-110 form a helix-loop-helix motif region; sequence GRLNGNIFALRAVVPKITKMSKEATLSDAIEHIKNL.

Belongs to the bHLH protein family.

Its subcellular location is the nucleus. Its function is as follows. Transcription factor that plays a crucial role in tapetum development. Required for male fertility and pollen differentiation within the developing anther. Plays a major role in maintaining tapetum development, starting in early meiosis. Required for pollen mother cell meiosis. May regulate the anther-specific cysteine protease CP1 and lipid-transfer proteins C4 and C6. Required for anther development. Functions in parallel with GAMYB to regulate early anther development. Functions upstream of the transcription factor TDR and may positively regulate its transcription. The chain is Transcription factor UDT1 from Oryza sativa subsp. japonica (Rice).